The following is a 649-amino-acid chain: Acetyl-coenzyme A synthetase (649 aa).

Residues 189 to 192, Thr-311, and Asn-335 each bind CoA; that span reads RGGK. ATP is bound by residues 387 to 389, 411 to 416, Asp-500, and Arg-515; these read GEP and DTWWQT. Residue Ser-523 coordinates CoA. Arg-526 is an ATP binding site. Val-537, His-539, and Val-542 together coordinate Mg(2+). Arg-584 provides a ligand contact to CoA. The residue at position 609 (Lys-609) is an N6-acetyllysine.

The protein belongs to the ATP-dependent AMP-binding enzyme family. It depends on Mg(2+) as a cofactor. Acetylated. Deacetylation by the SIR2-homolog deacetylase activates the enzyme.

It catalyses the reaction acetate + ATP + CoA = acetyl-CoA + AMP + diphosphate. In terms of biological role, catalyzes the conversion of acetate into acetyl-CoA (AcCoA), an essential intermediate at the junction of anabolic and catabolic pathways. AcsA undergoes a two-step reaction. In the first half reaction, AcsA combines acetate with ATP to form acetyl-adenylate (AcAMP) intermediate. In the second half reaction, it can then transfer the acetyl group from AcAMP to the sulfhydryl group of CoA, forming the product AcCoA. This is Acetyl-coenzyme A synthetase from Sinorhizobium medicae (strain WSM419) (Ensifer medicae).